Consider the following 448-residue polypeptide: Protein king tubby (448 aa).

Positions 103 to 195 (HELEDEESSP…NGTGGESEGD (93 aa)) are disordered. Low complexity predominate over residues 118–133 (QHQQSASHSANSTQSQ). Serine 141 bears the Phosphoserine mark. Gly residues predominate over residues 182–191 (NGTGNGTGGE).

This sequence belongs to the TUB family.

The protein localises to the cytoplasm. Its subcellular location is the nucleus. The protein resides in the cell projection. It is found in the cilium membrane. It localises to the rhabdomere. The polypeptide is Protein king tubby (Drosophila erecta (Fruit fly)).